The following is a 235-amino-acid chain: uncharacterized protein (235 aa).

Disordered regions lie at residues Ile20–Lys64 and Ser140–Gln164. Composition is skewed to low complexity over residues Asn30–Asn60 and Ser140–Asn161. Residues Lys174 to Leu213 adopt a coiled-coil conformation.

This is an uncharacterized protein from Dictyostelium discoideum (Social amoeba).